The following is a 173-amino-acid chain: Adenine phosphoribosyltransferase (173 aa).

This sequence belongs to the purine/pyrimidine phosphoribosyltransferase family. Homodimer.

The protein localises to the cytoplasm. The catalysed reaction is AMP + diphosphate = 5-phospho-alpha-D-ribose 1-diphosphate + adenine. It participates in purine metabolism; AMP biosynthesis via salvage pathway; AMP from adenine: step 1/1. Catalyzes a salvage reaction resulting in the formation of AMP, that is energically less costly than de novo synthesis. In Caldanaerobacter subterraneus subsp. tengcongensis (strain DSM 15242 / JCM 11007 / NBRC 100824 / MB4) (Thermoanaerobacter tengcongensis), this protein is Adenine phosphoribosyltransferase.